A 454-amino-acid polypeptide reads, in one-letter code: MHSAGLLMLTVAGYFTSGIPGNTASSDVAYLTPGTYINLSENILGLQTLRTFCYPGKRLTVSSLFETVEFVLAIGSDDYSQYGGKTPEEVLQHYKDKQSLFSITLFAQKRQLLQLSPFEQQCIGISSRQAYTVILNSIPLDLWRLAQFAVGILILFSARRLAKNSVFYYLVGIVIGICASLLVVIYLAAKLFPRRTMMYGVLIGGWTIGFYVIKQLADNLRLILITYRDHVLGYLVITGLISFLICYRIGPPKNPRSQTIVMWVLQAIGAVMAYFSSWHTSAVIFIMVLVFVAHYFPISWTNQIKFMYRRRFPLKRRMLTQEEYEQQTAVETSKSLADLRKYVNSPECKQWAVMGKLRDPLRFASFANGAPHLDDEEIEDHSRTIEESMDAAPEEESVEEPEEDKPAELLPLPNSQFRYQQAARNSEPEPESESDDSEEEEFFEQEVDLRQVVQ.

An N-terminal signal peptide occupies residues 1-18 (MHSAGLLMLTVAGYFTSG). Residue N38 is glycosylated (N-linked (GlcNAc...) asparagine). Helical transmembrane passes span 138–158 (IPLDLWRLAQFAVGILILFSA), 166–186 (VFYYLVGIVIGICASLLVVIY), 197–217 (MMYGVLIGGWTIGFYVIKQLA), 231–251 (VLGYLVITGLISFLICYRIGP), and 280–300 (TSAVIFIMVLVFVAHYFPISW). Acidic residues predominate over residues 388 to 405 (SMDAAPEEESVEEPEEDK). The tract at residues 388–454 (SMDAAPEEES…QEVDLRQVVQ (67 aa)) is disordered. Polar residues predominate over residues 414 to 424 (NSQFRYQQAAR). Residues 428-446 (PEPESESDDSEEEEFFEQE) are compositionally biased toward acidic residues.

It belongs to the NEMP family. As to quaternary structure, interacts with OTE. In terms of tissue distribution, expressed in both germline and somatic cells in the larval testis and prepupal ovary (at protein level). Also detected in the larval eye and larval wing disk (at protein level).

It localises to the nucleus inner membrane. Functionally, contributes to nuclear envelope stiffness in germ cells. Required for male and female fertility. The polypeptide is Nuclear envelope integral membrane protein (Drosophila melanogaster (Fruit fly)).